Consider the following 335-residue polypeptide: DNA-directed RNA polymerase subunit alpha (335 aa).

An alpha N-terminal domain (alpha-NTD) region spans residues 1 to 233 (MTAVNDFLTP…QQIAVFVDLE (233 aa)). Residues 247–335 (IDPILLRPVD…DDDRLNAKLR (89 aa)) form an alpha C-terminal domain (alpha-CTD) region.

Belongs to the RNA polymerase alpha chain family. In terms of assembly, homodimer. The RNAP catalytic core consists of 2 alpha, 1 beta, 1 beta' and 1 omega subunit. When a sigma factor is associated with the core the holoenzyme is formed, which can initiate transcription.

It carries out the reaction RNA(n) + a ribonucleoside 5'-triphosphate = RNA(n+1) + diphosphate. In terms of biological role, DNA-dependent RNA polymerase catalyzes the transcription of DNA into RNA using the four ribonucleoside triphosphates as substrates. The protein is DNA-directed RNA polymerase subunit alpha of Alcanivorax borkumensis (strain ATCC 700651 / DSM 11573 / NCIMB 13689 / SK2).